The following is a 95-amino-acid chain: MSLDTKTIGKIAHLARLEFDDKSLEAFSTDFNKILSWIDKLNEVNTDNVEPLIHMSHELNVLREDIDKVTISHEEALKNAPKKDSDYFRVPKFLS.

This sequence belongs to the GatC family. Heterotrimer of A, B and C subunits.

The enzyme catalyses L-glutamyl-tRNA(Gln) + L-glutamine + ATP + H2O = L-glutaminyl-tRNA(Gln) + L-glutamate + ADP + phosphate + H(+). The catalysed reaction is L-aspartyl-tRNA(Asn) + L-glutamine + ATP + H2O = L-asparaginyl-tRNA(Asn) + L-glutamate + ADP + phosphate + 2 H(+). Its function is as follows. Allows the formation of correctly charged Asn-tRNA(Asn) or Gln-tRNA(Gln) through the transamidation of misacylated Asp-tRNA(Asn) or Glu-tRNA(Gln) in organisms which lack either or both of asparaginyl-tRNA or glutaminyl-tRNA synthetases. The reaction takes place in the presence of glutamine and ATP through an activated phospho-Asp-tRNA(Asn) or phospho-Glu-tRNA(Gln). The protein is Aspartyl/glutamyl-tRNA(Asn/Gln) amidotransferase subunit C of Cytophaga hutchinsonii (strain ATCC 33406 / DSM 1761 / CIP 103989 / NBRC 15051 / NCIMB 9469 / D465).